Consider the following 277-residue polypeptide: Phosphatidylserine decarboxylase proenzyme (277 aa).

Active-site charge relay system; for autoendoproteolytic cleavage activity residues include Asp-88, His-144, and Ser-242. Residue Ser-242 is the Schiff-base intermediate with substrate; via pyruvic acid; for decarboxylase activity of the active site. Pyruvic acid (Ser); by autocatalysis is present on Ser-242.

It belongs to the phosphatidylserine decarboxylase family. PSD-B subfamily. Prokaryotic type I sub-subfamily. As to quaternary structure, heterodimer of a large membrane-associated beta subunit and a small pyruvoyl-containing alpha subunit. The cofactor is pyruvate. Post-translationally, is synthesized initially as an inactive proenzyme. Formation of the active enzyme involves a self-maturation process in which the active site pyruvoyl group is generated from an internal serine residue via an autocatalytic post-translational modification. Two non-identical subunits are generated from the proenzyme in this reaction, and the pyruvate is formed at the N-terminus of the alpha chain, which is derived from the carboxyl end of the proenzyme. The autoendoproteolytic cleavage occurs by a canonical serine protease mechanism, in which the side chain hydroxyl group of the serine supplies its oxygen atom to form the C-terminus of the beta chain, while the remainder of the serine residue undergoes an oxidative deamination to produce ammonia and the pyruvoyl prosthetic group on the alpha chain. During this reaction, the Ser that is part of the protease active site of the proenzyme becomes the pyruvoyl prosthetic group, which constitutes an essential element of the active site of the mature decarboxylase.

The protein resides in the cell membrane. The catalysed reaction is a 1,2-diacyl-sn-glycero-3-phospho-L-serine + H(+) = a 1,2-diacyl-sn-glycero-3-phosphoethanolamine + CO2. Its pathway is phospholipid metabolism; phosphatidylethanolamine biosynthesis; phosphatidylethanolamine from CDP-diacylglycerol: step 2/2. Its function is as follows. Catalyzes the formation of phosphatidylethanolamine (PtdEtn) from phosphatidylserine (PtdSer). The chain is Phosphatidylserine decarboxylase proenzyme from Psychrobacter arcticus (strain DSM 17307 / VKM B-2377 / 273-4).